A 1493-amino-acid chain; its full sequence is Protein RNA-directed DNA methylation 3 (1493 aa).

2 disordered regions span residues 1 to 34 (MDRKGKGKQVAGSDSYSGGQKRKNSVEFRDEGLR) and 54 to 96 (GYYG…SSFV). The short motif at 21–28 (KRKNSVEF) is the Nuclear localization signal element. Residues 24-34 (NSVEFRDEGLR) are compositionally biased toward basic and acidic residues. The segment covering 60–80 (SDEDDDGLGFLNDMEDEPEVE) has biased composition (acidic residues). The span at 81-92 (ESSKAGKGEKGK) shows a compositional bias: basic and acidic residues. The KOW 1 domain occupies 239 to 266 (KVSEGTWARVKNGKYKGDLAQIVAVSDT). The segment at 393 to 432 (PTCREGGKGEGSGGGKGEGSGGGKGEGSRGGKGEGSSDFK) is disordered. Residues 401 to 417 (GEGSGGGKGEGSGGGKG) are compositionally biased toward gly residues. Residues 418 to 432 (EGSRGGKGEGSSDFK) show a composition bias toward basic and acidic residues. Positions 501–528 (QISVNDVVKISKGPSEGKQGVVRQVYRG) constitute a KOW 2 domain. The disordered stretch occupies residues 578-602 (SSPKSPLSPEKEWQPRERYNSSNQG). Basic and acidic residues predominate over residues 586 to 596 (PEKEWQPRERY). The 28-residue stretch at 607–634 (TYSIGQKLRIRVGPLKGYLCRVIALRYS) folds into the KOW 3 domain. Disordered stretches follow at residues 692-711 (IGAGTSSEGGNWNIGGPSTD), 728-747 (EKNPWGGSKPTSDVSPTVAD), and 757-1493 (AAEN…KTGW). Copy 1 of the repeat occupies 732–741 (WGGSKPTSDV). The interval 732-1493 (WGGSKPTSDV…WGTGDKKTGW (762 aa)) is 42 X 9 AA approximate WG/GW-rich tandem repeats. Over residues 757 to 767 (AAENKPASASD) the composition is skewed to low complexity. 37 tandem repeats follow at residues 775–784 (WGKTPASEAG), 789–797 (WGDTSASNV), 818–827 (WGTHGGSSGG), 836–845 (WGKLCEASES), 854–863 (WGKKGGSDGE), 866–875 (WGNKDGNSSA), 883–892 (WGQQDKGSDE), 917–926 (GWNKSAEDSN), 935–943 (WGQPNDGSS), 944–953 (WGKKGDGAAS), 954–962 (WGKKDDGGS), 963–972 (WGKKDDGNKD), 978–987 (WGKKDDGQKD), 1003–1012 (WGKKDDGGSS), 1013–1022 (WGKKDDGGSL), 1023–1032 (WGKKDDGGSS), 1033–1042 (WGKEDDGGSL), 1043–1052 (WGKKDDGESS), 1053–1062 (WGKKDDGESS), 1063–1072 (WGKKDDGGSS), 1073–1082 (WGKKDEGGYS), 1132–1141 (WGKQDGDGGG), 1144–1153 (WGKENDAGGG), 1156–1165 (WGKQDNGVGS), 1167–1176 (WGKQNDGSGG), 1180–1189 (WGKQNDAGGG), 1192–1201 (WGKQDSGGDG), 1204–1213 (WGKQDGGGDS), 1217–1226 (WGKQNNTSGG), 1229–1238 (WGKQSDAGGG), 1241–1250 (WGKQDGGGGG), 1253–1262 (WGKQDGGGGS), 1266–1275 (WGKQNETSNG), 1278–1287 (WGKQNDSGGG), 1290–1299 (WGKQDGGGGG), 1302–1311 (WGKQNDGGGG), and 1314–1323 (WGKQGDGGSK). Polar residues predominate over residues 790–812 (GDTSASNVEASSWEKQGASTSNV). The segment covering 846–860 (SQKKEESSWGKKGGS) has biased composition (basic and acidic residues). Over residues 866–875 (WGNKDGNSSA) the composition is skewed to polar residues. The span at 955-1090 (GKKDDGGSWG…YSEQTFDRGG (136 aa)) shows a compositional bias: basic and acidic residues. A compositionally biased stretch (low complexity) spans 1122 to 1134 (PWSKPSGGSSWGK). The segment covering 1156–1172 (WGKQDNGVGSSWGKQND) has biased composition (polar residues). The span at 1186 to 1213 (AGGGSSWGKQDSGGDGSSWGKQDGGGDS) shows a compositional bias: gly residues. A compositionally biased stretch (polar residues) spans 1218 to 1231 (GKQNNTSGGSSWGK). The segment covering 1235-1264 (AGGGSSWGKQDGGGGGSSWGKQDGGGGSGS) has biased composition (gly residues). Over residues 1270 to 1283 (NETSNGSSWGKQND) the composition is skewed to polar residues. Residues 1284-1321 (SGGGSSWGKQDGGGGGSSWGKQNDGGGGSSWGKQGDGG) show a composition bias toward gly residues. 2 stretches are compositionally biased toward polar residues: residues 1366–1382 (WKTDNQENTWKSDQSGG) and 1392–1401 (DSNNSKPSGS). The stretch at 1389–1398 (WGEDSNNSKP) is repeat 39. Residues 1416–1430 (NSKKETNDKPGDDSK) show a composition bias toward basic and acidic residues. Polar residues predominate over residues 1432–1442 (AWGTSNDQVNT). A run of 3 repeats spans residues 1433–1442 (WGTSNDQVNT), 1467–1475 (WGGKTNAVA), and 1484–1493 (WGTGDKKTGW).

Interacts with AGO4 via its C-terminal region and with RNA transcripts. Binds chromatin at loci subject to transcriptional silencing downstream of RNA Polymerase V, but independently from the presence of 24-nt siRNA.

The protein localises to the nucleus. It localises to the nucleoplasm. Functionally, effector of RNA-directed DNA methylation (RdDM) triggered by small interfering RNAs (siRNAs, 24-nt RNAs). Functions as an adapter protein that binds scaffold transcripts generated by polymerase V and recruits AGO4 and AGO4-bound siRNAs to form an RdDM effector complex. Promotes the expression of 24-nt RNAs. Required for the initial establishment of DNA methylation. Together with AGO4, required for transcriptional gene silencing (TGS) by DNA methylation and repressive histone modifications (H3K9me2) of several chromatin loci. The chain is Protein RNA-directed DNA methylation 3 from Arabidopsis thaliana (Mouse-ear cress).